The following is a 114-amino-acid chain: U10-agatoxin-Ao1a (114 aa).

The first 15 residues, 1-15 (MCVATCLCTFAYVLA), serve as a signal peptide directing secretion. Residues 16–32 (KSDEGENLISKVEETQR) constitute a propeptide that is removed on maturation. 5 disulfide bridges follow: Cys34-Cys53, Cys41-Cys59, Cys50-Cys86, Cys52-Cys76, and Cys61-Cys74. Residues 95-114 (GSQNPSLCKDPNPRRRRHGK) are disordered.

This sequence belongs to the neurotoxin 04 (omega-agtx) family. 03 (type II/III omega-agtx) subfamily. In terms of tissue distribution, expressed by the venom gland.

The protein resides in the secreted. Functionally, inhibits voltage-gated calcium channels (Cav). In Agelena orientalis (Funnel-web spider), this protein is U10-agatoxin-Ao1a.